Here is a 152-residue protein sequence, read N- to C-terminus: Small ribosomal subunit protein uS15 (152 aa).

The segment covering 1-10 (MARMYARRRG) has biased composition (basic residues). A disordered region spans residues 1-24 (MARMYARRRGTSSSVRPYRKEAPE).

This sequence belongs to the universal ribosomal protein uS15 family. In terms of assembly, part of the 30S ribosomal subunit.

The protein is Small ribosomal subunit protein uS15 of Methanoculleus marisnigri (strain ATCC 35101 / DSM 1498 / JR1).